The sequence spans 355 residues: Guanine nucleotide-binding protein subunit alpha-14 (355 aa).

Residues 34–355 (RELKLLLLGT…QLNLREFNLV (322 aa)) enclose the G-alpha domain. The G1 motif stretch occupies residues 37-50 (KLLLLGTGESGKST). Residues 42-49 (GTGESGKS), 176-182 (LRVRVPT), 201-205 (DVGGQ), 270-273 (NKKD), and alanine 327 each bind GTP. Position 49 (serine 49) interacts with Mg(2+). Residues 174–182 (DVLRVRVPT) form a G2 motif region. Arginine 179 is subject to ADP-ribosylarginine; by cholera toxin. Residue threonine 182 coordinates Mg(2+). The interval 197–206 (FRMVDVGGQR) is G3 motif. The segment at 266–273 (ILFLNKKD) is G4 motif. Residues 325 to 330 (TCATDT) form a G5 motif region.

Belongs to the G-alpha family. G(q) subfamily. G proteins are composed of 3 units; alpha, beta and gamma. The alpha chain contains the guanine nucleotide binding site.

In terms of biological role, guanine nucleotide-binding proteins (G proteins) are involved as modulators or transducers in various transmembrane signaling systems. This is Guanine nucleotide-binding protein subunit alpha-14 (GNA14) from Homo sapiens (Human).